An 895-amino-acid chain; its full sequence is Pyruvate dehydrogenase E1 component (895 aa).

Positions 1–20 (MSAVPEQILGASSANDADPQ) are disordered.

As to quaternary structure, homodimer. Part of the PDH complex, consisting of multiple copies of pyruvate dehydrogenase (E1), dihydrolipoamide acetyltransferase (E2) and lipoamide dehydrogenase (E3). The cofactor is thiamine diphosphate.

The catalysed reaction is N(6)-[(R)-lipoyl]-L-lysyl-[protein] + pyruvate + H(+) = N(6)-[(R)-S(8)-acetyldihydrolipoyl]-L-lysyl-[protein] + CO2. Its function is as follows. Component of the pyruvate dehydrogenase (PDH) complex, that catalyzes the overall conversion of pyruvate to acetyl-CoA and CO(2). This Cupriavidus necator (strain ATCC 17699 / DSM 428 / KCTC 22496 / NCIMB 10442 / H16 / Stanier 337) (Ralstonia eutropha) protein is Pyruvate dehydrogenase E1 component (pdhA).